The primary structure comprises 553 residues: Arginine--tRNA ligase (553 aa).

Residues 130-140 (ANPTGPVHLGG) carry the 'HIGH' region motif.

The protein belongs to the class-I aminoacyl-tRNA synthetase family. As to quaternary structure, monomer.

The protein localises to the cytoplasm. It catalyses the reaction tRNA(Arg) + L-arginine + ATP = L-arginyl-tRNA(Arg) + AMP + diphosphate. This chain is Arginine--tRNA ligase, found in Saccharopolyspora erythraea (strain ATCC 11635 / DSM 40517 / JCM 4748 / NBRC 13426 / NCIMB 8594 / NRRL 2338).